Reading from the N-terminus, the 453-residue chain is UDP-N-acetylmuramoylalanine--D-glutamate ligase (453 aa).

Residue 115 to 121 (GTNGKTT) coordinates ATP.

It belongs to the MurCDEF family.

The protein resides in the cytoplasm. It carries out the reaction UDP-N-acetyl-alpha-D-muramoyl-L-alanine + D-glutamate + ATP = UDP-N-acetyl-alpha-D-muramoyl-L-alanyl-D-glutamate + ADP + phosphate + H(+). Its pathway is cell wall biogenesis; peptidoglycan biosynthesis. In terms of biological role, cell wall formation. Catalyzes the addition of glutamate to the nucleotide precursor UDP-N-acetylmuramoyl-L-alanine (UMA). In Geotalea daltonii (strain DSM 22248 / JCM 15807 / FRC-32) (Geobacter daltonii), this protein is UDP-N-acetylmuramoylalanine--D-glutamate ligase.